The chain runs to 885 residues: Exosome complex component 10 (885 aa).

A compositionally biased stretch (basic and acidic residues) spans 1–10 (MAPPSPREHQ). 2 disordered regions span residues 1 to 23 (MAPP…PDAE) and 210 to 232 (KPLP…EDLD). K19 is covalently cross-linked (Glycyl lysine isopeptide (Lys-Gly) (interchain with G-Cter in SUMO2)). The segment covering 217-230 (SKERRERPQDRPED) has biased composition (basic and acidic residues). In terms of domain architecture, 3'-5' exonuclease spans 289 to 455 (HVVSSLDELV…YIYDRMRLEL (167 aa)). The Mg(2+) site is built by D313, E315, D371, and D440. The HRDC domain maps to 503 to 583 (NSQQLTAFQL…QQAREMPLLK (81 aa)). Residue K583 forms a Glycyl lysine isopeptide (Lys-Gly) (interchain with G-Cter in SUMO1); alternate linkage. Residue K583 forms a Glycyl lysine isopeptide (Lys-Gly) (interchain with G-Cter in SUMO2); alternate linkage. K710 is covalently cross-linked (Glycyl lysine isopeptide (Lys-Gly) (interchain with G-Cter in SUMO2)). The segment at 730 to 885 (VQKEPKEAAK…RGFRHNWPKR (156 aa)) is disordered. Composition is skewed to basic and acidic residues over residues 732-756 (KEPK…KEES) and 776-794 (ATKK…EQKQ). Position 821 is a phosphoserine (S821). Glycyl lysine isopeptide (Lys-Gly) (interchain with G-Cter in SUMO2) cross-links involve residues K833, K859, and K873.

This sequence belongs to the exosome component 10/RRP6 family. Component of the RNA exosome complex. The catalytically inactive RNA exosome core complex (Exo-9) associates with the catalytic subunit EXOSC10/RRP6 (via its N-terminus). Exo-9 may associate with DIS3 to form the nucleolar exosome complex, or DIS3L to form the cytoplasmic exosome complex. The RNA exosome complex interacts with cofactors C1D/RRP47, MPHOSPH6/MPP6 and MTREX/MTR4. Interacts with MTREX; the interaction with MTREX mediates the association of MTREX with nuclear RNA exosomes. Part of the small subunit (SSU) processome, composed of more than 70 proteins and the RNA chaperone small nucleolar RNA (snoRNA) U3. Interacts with ALYREF/THOC4. Interacts with DHX36; this interaction occurs in a RNase-insensitive manner. Interacts with NRDE2. Interacts (via C-terminus) with USP36 (via C-terminus); the interaction is facilitated by the association with RNA and promotes sumoylation of EXOSC10. Mg(2+) is required as a cofactor. Post-translationally, sumoylated by USP36; sumoylation does not significantly affect EXOSC10 nucleolar localization and association with core exosome and USP36, but regulates the nucleolar RNA exosome activity in rRNA processing by promoting binding of EXOSC10 to pre-rRNAs. Effects of sumoylation on EXOSC10 levels vary between different studies. Sumoylation of EXOSC10 is required for the modulation of EXOSC10 effects on cellular protein translation and cell proliferation. Sumoylation is promoted by mild hypothermia. In terms of tissue distribution, expressed in testis (at protein level).

The protein localises to the cytoplasm. The protein resides in the nucleus. Its subcellular location is the nucleolus. It is found in the nucleoplasm. Functionally, catalytic component of the RNA exosome complex which has 3'-&gt;5' exoribonuclease activity and participates in a multitude of cellular RNA processing and degradation events. In the nucleus, the RNA exosome complex is involved in proper maturation of stable RNA species such as rRNA, snRNA and snoRNA, in the elimination of RNA processing by-products and non-coding 'pervasive' transcripts, such as antisense RNA species and promoter-upstream transcripts (PROMPTs), and of mRNAs with processing defects, thereby limiting or excluding their export to the cytoplasm. Part of the small subunit (SSU) processome, first precursor of the small eukaryotic ribosomal subunit. During the assembly of the SSU processome in the nucleolus, many ribosome biogenesis factors, an RNA chaperone and ribosomal proteins associate with the nascent pre-rRNA and work in concert to generate RNA folding, modifications, rearrangements and cleavage as well as targeted degradation of pre-ribosomal RNA by the RNA exosome. The RNA exosome may be involved in Ig class switch recombination (CSR) and/or Ig variable region somatic hypermutation (SHM) by targeting AICDA deamination activity to transcribed dsDNA substrates. In the cytoplasm, the RNA exosome complex is involved in general mRNA turnover and specifically degrades inherently unstable mRNAs containing AU-rich elements (AREs) within their 3' untranslated regions, and in RNA surveillance pathways, preventing translation of aberrant mRNAs. It seems to be involved in degradation of histone mRNA. EXOSC10 is required for nucleolar localization of C1D and probably mediates the association of MTREX, C1D and MPHOSPH6 with the RNA exosome involved in the maturation of 5.8S rRNA. Plays a role in the recruitment of replication protein A complex (RPA) and RAD51 to DNA double-strand breaks caused by irradiation, contributing to DNA repair by homologous recombination. Regulates levels of damage-induced RNAs in order to prevent DNA-RNA hybrid formation at DNA double-strand breaks and limit DNA end resection after damage. Plays a role in oocyte development, maturation and survival. Required for normal testis development and mitotic division of spermatogonia. Plays a role in proper embryo development. Required for global protein translation. Required for cell proliferation. The polypeptide is Exosome complex component 10 (Rattus norvegicus (Rat)).